The chain runs to 216 residues: Pyrrolidone-carboxylate peptidase (216 aa).

Residues Glu-80, Cys-143, and His-168 contribute to the active site.

Belongs to the peptidase C15 family. Homotetramer.

The protein localises to the cytoplasm. The enzyme catalyses Release of an N-terminal pyroglutamyl group from a polypeptide, the second amino acid generally not being Pro.. Functionally, removes 5-oxoproline from various penultimate amino acid residues except L-proline. The protein is Pyrrolidone-carboxylate peptidase of Cupriavidus pinatubonensis (strain JMP 134 / LMG 1197) (Cupriavidus necator (strain JMP 134)).